The primary structure comprises 428 residues: 3-phosphoshikimate 1-carboxyvinyltransferase (428 aa).

K22, S23, and R27 together coordinate 3-phosphoshikimate. Residue K22 coordinates phosphoenolpyruvate. Residues G94 and R122 each coordinate phosphoenolpyruvate. 6 residues coordinate 3-phosphoshikimate: S169, S170, Q171, S197, D315, and K342. Q171 contributes to the phosphoenolpyruvate binding site. D315 acts as the Proton acceptor in catalysis. Positions 346, 389, and 414 each coordinate phosphoenolpyruvate.

This sequence belongs to the EPSP synthase family. As to quaternary structure, monomer.

The protein resides in the cytoplasm. It catalyses the reaction 3-phosphoshikimate + phosphoenolpyruvate = 5-O-(1-carboxyvinyl)-3-phosphoshikimate + phosphate. It participates in metabolic intermediate biosynthesis; chorismate biosynthesis; chorismate from D-erythrose 4-phosphate and phosphoenolpyruvate: step 6/7. Its function is as follows. Catalyzes the transfer of the enolpyruvyl moiety of phosphoenolpyruvate (PEP) to the 5-hydroxyl of shikimate-3-phosphate (S3P) to produce enolpyruvyl shikimate-3-phosphate and inorganic phosphate. The protein is 3-phosphoshikimate 1-carboxyvinyltransferase of Cellvibrio japonicus (strain Ueda107) (Pseudomonas fluorescens subsp. cellulosa).